Reading from the N-terminus, the 515-residue chain is Serine/threonine-protein phosphatase PP-Z (515 aa).

The disordered stretch occupies residues 1–186; that stretch reads MGQGSSKHAD…SSTDPDDPET (186 aa). The segment covering 17 to 30 has biased composition (polar residues); it reads PSFSRSDTQGSIKS. Ser18 is modified (phosphoserine). Basic and acidic residues predominate over residues 40 to 51; it reads KGKDSNHDRRTS. A compositionally biased stretch (pro residues) spans 63 to 74; the sequence is ETPPSLPPPPSP. Positions 91 to 109 are enriched in polar residues; the sequence is DSGNSSQSPTSPHPSNQPA. Over residues 126 to 143 the composition is skewed to low complexity; sequence SSSSYAVSPTSPTSPTSS. Positions 248, 250, 276, and 308 each coordinate Mn(2+). The active-site Proton donor is His309. Residues His357 and His432 each contribute to the Mn(2+) site. Ser505 and Ser514 each carry phosphoserine.

The protein belongs to the PPP phosphatase family. PP-Z subfamily. Requires Mn(2+) as cofactor.

Its subcellular location is the cytoplasm. The catalysed reaction is O-phospho-L-seryl-[protein] + H2O = L-seryl-[protein] + phosphate. The enzyme catalyses O-phospho-L-threonyl-[protein] + H2O = L-threonyl-[protein] + phosphate. The protein is Serine/threonine-protein phosphatase PP-Z (pzh1) of Schizosaccharomyces pombe (strain 972 / ATCC 24843) (Fission yeast).